We begin with the raw amino-acid sequence, 271 residues long: Formamidopyrimidine-DNA glycosylase (271 aa).

Proline 2 serves as the catalytic Schiff-base intermediate with DNA. Catalysis depends on glutamate 3, which acts as the Proton donor. Lysine 58 (proton donor; for beta-elimination activity) is an active-site residue. Residues histidine 91, arginine 110, and arginine 152 each contribute to the DNA site. The segment at 237 to 271 (SVYGRNDAPCPGCGAPIRRSRQGGRSTYFCDRCQH) adopts an FPG-type zinc-finger fold. Arginine 261 functions as the Proton donor; for delta-elimination activity in the catalytic mechanism.

It belongs to the FPG family. Monomer. It depends on Zn(2+) as a cofactor.

It catalyses the reaction Hydrolysis of DNA containing ring-opened 7-methylguanine residues, releasing 2,6-diamino-4-hydroxy-5-(N-methyl)formamidopyrimidine.. The enzyme catalyses 2'-deoxyribonucleotide-(2'-deoxyribose 5'-phosphate)-2'-deoxyribonucleotide-DNA = a 3'-end 2'-deoxyribonucleotide-(2,3-dehydro-2,3-deoxyribose 5'-phosphate)-DNA + a 5'-end 5'-phospho-2'-deoxyribonucleoside-DNA + H(+). Involved in base excision repair of DNA damaged by oxidation or by mutagenic agents. Acts as a DNA glycosylase that recognizes and removes damaged bases. Has a preference for oxidized purines, such as 7,8-dihydro-8-oxoguanine (8-oxoG). Has AP (apurinic/apyrimidinic) lyase activity and introduces nicks in the DNA strand. Cleaves the DNA backbone by beta-delta elimination to generate a single-strand break at the site of the removed base with both 3'- and 5'-phosphates. This is Formamidopyrimidine-DNA glycosylase from Geotalea uraniireducens (strain Rf4) (Geobacter uraniireducens).